The following is a 341-amino-acid chain: Ribosomal RNA small subunit methyltransferase H (341 aa).

Residues 47–49 (GGY), Asp64, Phe91, Asp109, and Gln116 contribute to the S-adenosyl-L-methionine site.

It belongs to the methyltransferase superfamily. RsmH family.

It localises to the cytoplasm. It catalyses the reaction cytidine(1402) in 16S rRNA + S-adenosyl-L-methionine = N(4)-methylcytidine(1402) in 16S rRNA + S-adenosyl-L-homocysteine + H(+). Functionally, specifically methylates the N4 position of cytidine in position 1402 (C1402) of 16S rRNA. The protein is Ribosomal RNA small subunit methyltransferase H of Rhizobium johnstonii (strain DSM 114642 / LMG 32736 / 3841) (Rhizobium leguminosarum bv. viciae).